Here is a 465-residue protein sequence, read N- to C-terminus: MSNKMWGGRFGEGPDAIMEEINVSIDVDRHLYAQDIAASKVHAEMLAAQGIIAANDAKKIGKGLDTILSEIRDDSFDFKRALEDIHMNVESRLGELIGPSAGRLHTARSRNDQVATDFRLYVRDIIDETDNALATFQHTLATRALEFAGTVMPGFTHLQTAQPVTFGHHLLAYVEMAARDRGRFADARRRLNESPLGAAALAGTSFPIDRHATAKGLGFDRPMANSLDAVSDRDFVLETLSAAAIASTHLSRFAEEMVIWTSPLVGLVRLSDKFTTGSSIMPQKRNPDAAELVRAKTGRVVGALTGLLVVMKGLPLAYQKDMQEDKQGAMEAFSALSLAIRAMTGMVADLVPDEARMKAAAGDGYATATDLADWLVRTLKMPFRDAHHVTGRIVAAASKQGVALHELPLSAMQAVEPRITRDALAVLSVEASVKSRTSYGGTAPKNVRAQAKAWLRRLEKKRTPD.

This sequence belongs to the lyase 1 family. Argininosuccinate lyase subfamily.

It localises to the cytoplasm. It catalyses the reaction 2-(N(omega)-L-arginino)succinate = fumarate + L-arginine. It participates in amino-acid biosynthesis; L-arginine biosynthesis; L-arginine from L-ornithine and carbamoyl phosphate: step 3/3. The chain is Argininosuccinate lyase from Nitrobacter winogradskyi (strain ATCC 25391 / DSM 10237 / CIP 104748 / NCIMB 11846 / Nb-255).